The following is an 83-amino-acid chain: CLAVATA3/ESR (CLE)-related protein 3 (83 aa).

The first 24 residues, 1–24, serve as a signal peptide directing secretion; the sequence is MASLKLWVCLVLLLVLELTSVHEC. Positions 38 to 58 form a coiled coil; the sequence is RLKKIRRELFERLKEMKGRSE. A disordered region spans residues 53–83; the sequence is MKGRSEGEETILGNTLDSKRLSPGGPDPRHH. 2 positions are modified to hydroxyproline: P75 and P78. P78 carries an O-linked (Ara...) hydroxyproline glycan.

Belongs to the CLV3/ESR signal peptide family. The O-glycosylation (arabinosylation) of the hydroxyproline Pro-78 enhances binding affinity of the CLE3p peptide for its receptor. Mostly expressed in roots, stems and apex, and, to a lower extent, in seedlings, leaves, flowers, siliques and pollen.

The protein localises to the secreted. The protein resides in the extracellular space. Its function is as follows. Extracellular signal peptide that regulates cell fate. In Arabidopsis thaliana (Mouse-ear cress), this protein is CLAVATA3/ESR (CLE)-related protein 3.